The chain runs to 483 residues: Glutamyl-tRNA(Gln) amidotransferase subunit A (483 aa).

Active-site charge relay system residues include lysine 76 and serine 151. Residue serine 175 is the Acyl-ester intermediate of the active site.

The protein belongs to the amidase family. GatA subfamily. In terms of assembly, heterotrimer of A, B and C subunits.

The catalysed reaction is L-glutamyl-tRNA(Gln) + L-glutamine + ATP + H2O = L-glutaminyl-tRNA(Gln) + L-glutamate + ADP + phosphate + H(+). Its function is as follows. Allows the formation of correctly charged Gln-tRNA(Gln) through the transamidation of misacylated Glu-tRNA(Gln) in organisms which lack glutaminyl-tRNA synthetase. The reaction takes place in the presence of glutamine and ATP through an activated gamma-phospho-Glu-tRNA(Gln). This Pseudomonas syringae pv. syringae (strain B728a) protein is Glutamyl-tRNA(Gln) amidotransferase subunit A.